A 208-amino-acid chain; its full sequence is Small ribosomal subunit protein uS4 (208 aa).

An S4 RNA-binding domain is found at 98–161; sequence RRLDNVIYRL…RKMPVIAEAQ (64 aa).

It belongs to the universal ribosomal protein uS4 family. As to quaternary structure, part of the 30S ribosomal subunit. Contacts protein S5. The interaction surface between S4 and S5 is involved in control of translational fidelity.

In terms of biological role, one of the primary rRNA binding proteins, it binds directly to 16S rRNA where it nucleates assembly of the body of the 30S subunit. Functionally, with S5 and S12 plays an important role in translational accuracy. The polypeptide is Small ribosomal subunit protein uS4 (Oleidesulfovibrio alaskensis (strain ATCC BAA-1058 / DSM 17464 / G20) (Desulfovibrio alaskensis)).